Consider the following 279-residue polypeptide: Undecaprenyl-diphosphatase (279 aa).

Helical transmembrane passes span 2–22 (LFIELLKAIFFGVIEGVTEWL), 44–64 (AFMEMFNIVIQLGAIIAVIVI), 85–105 (WQLWLKVAIACIPSIIIAVPL), 113–133 (FNHMLPIAIALIVYGIAFLWI), 163–183 (VLSIIPGTSRSGATILGAIIL), 188–208 (TVAADFTFFLAIPTMFGYSGL), 225–245 (LLVLLVASLTAFAVSLYVIKL), and 255–275 (FTVFGRYRIVLGSLLIVYSVF).

Belongs to the UppP family.

Its subcellular location is the cell membrane. The enzyme catalyses di-trans,octa-cis-undecaprenyl diphosphate + H2O = di-trans,octa-cis-undecaprenyl phosphate + phosphate + H(+). Catalyzes the dephosphorylation of undecaprenyl diphosphate (UPP). Confers resistance to bacitracin. This is Undecaprenyl-diphosphatase from Streptococcus equi subsp. zooepidemicus (strain MGCS10565).